A 3416-amino-acid chain; its full sequence is Genome polyprotein (3416 aa).

Residues 1-34 (MAKGAVLKGKGGGPPRRVPKETAKKTRQGPGRLP) form a disordered region. The Cytoplasmic portion of the chain corresponds to 1-99 (MAKGAVLKGK…NRRRGKRRST (99 aa)). A propeptide spans 97–117 (RSTTGLLTSILLACLATLVIS) (ER anchor for the capsid protein C, removed in mature form by serine protease NS3). A helical transmembrane segment spans residues 100–120 (TGLLTSILLACLATLVISATI). Residues 121 to 243 (RRERTGDMVI…HLTRVEGWVW (123 aa)) lie on the Extracellular side of the membrane. Asn-145 carries an N-linked (GlcNAc...) asparagine; by host glycan. The chain crosses the membrane as a helical span at residues 244–261 (KNKLLTMAFCAVVWMVTD). A topological domain (cytoplasmic) is located at residue Ser-262. The chain crosses the membrane as a helical span at residues 263–281 (LPTRFIVITVALCLAPTYA). The Extracellular portion of the chain corresponds to 282-728 (TRCTHLQNRD…HTAFGAAFNT (447 aa)). Cystine bridges form between Cys-284–Cys-311, Cys-341–Cys-397, Cys-341–Cys-402, Cys-355–Cys-386, Cys-373–Cys-397, and Cys-373–Cys-402. Residues 379–392 (DRGWGNHCGLFGKG) are fusion peptide. The N-linked (GlcNAc...) asparagine; by host glycan is linked to Asn-435. Cystine bridges form between Cys-467-Cys-571 and Cys-588-Cys-619. A helical transmembrane segment spans residues 729 to 749 (IFGGVGFLPRILLGVALAWLG). Residues 750–756 (LNSRNPT) lie on the Cytoplasmic side of the membrane. The helical transmembrane segment at 757 to 777 (LSVGFLITGGLVLTMTLGVGA) threads the bilayer. Topologically, residues 778–1134 (DMGCAIDANR…RSMVLADNGA (357 aa)) are extracellular. 6 cysteine pairs are disulfide-bonded: Cys-781/Cys-792, Cys-832/Cys-922, Cys-957/Cys-1002, Cys-1059/Cys-1108, Cys-1070/Cys-1092, and Cys-1091/Cys-1095. N-linked (GlcNAc...) asparagine; by host glycosylation is found at Asn-862, Asn-985, and Asn-1001. The helical transmembrane segment at 1135 to 1155 (MLSEGGVPGIVAVFVVLELVI) threads the bilayer. Residues 1156–1162 (RRRPTTG) are Cytoplasmic-facing. A helical transmembrane segment spans residues 1163-1183 (TSVVWCGVVVLGLVVTGLVTI). The Lumenal segment spans residues 1184-1189 (EGLCRY). A helical transmembrane segment spans residues 1190 to 1210 (VVAVGILMSMELGPEIVALVL). Residues 1211-1235 (LQAVFDMRTGLLVAFAVKRAYTTRE) are Cytoplasmic-facing. The chain crosses the membrane as a helical span at residues 1236-1256 (AVVTYFLLLVLELGFPEASLS). Residues 1257–1295 (NIWKWADSLAMGTLILQACSQEGRARVGYLLAAMMTQKD) are Lumenal-facing. Residues 1296-1316 (MAIIHTGLTIFLSAATAMAVW) traverse the membrane as a helical segment. Residues 1317-1361 (SMIKGQRDQKGLSWATPLVGLFGGEGVGLRLLAFRRLAERRNRRS) lie on the Cytoplasmic side of the membrane. The chain crosses the membrane as a helical span at residues 1362–1379 (FSEPLTVVGVMLTVASGM). At 1380–1384 (VRHTS) the chain is on the lumenal side. Residues 1385 to 1405 (QEALCALVAGAFLLLMMVLGT) form a helical membrane-spanning segment. Over 1406 to 1458 (RKMQLIAEWCGEVEWNPDLVNEGGEVNLKVRQDAMGNLHLTEVEKEERAMALW) the chain is Cytoplasmic. Positions 1412-1451 (AEWCGEVEWNPDLVNEGGEVNLKVRQDAMGNLHLTEVEKE) are interacts with and activates NS3 protease. Positions 1459-1479 (LLAGLVASAFHWAGILIVLAI) form an intramembrane region, helical. The Cytoplasmic segment spans residues 1480–2162 (WTFFEMLSSG…RMAERDAPEA (683 aa)). In terms of domain architecture, Peptidase S7 spans 1492–1671 (SELVFSGQGT…EAEKSRPELP (180 aa)). Residues His-1545, Asp-1569, and Ser-1629 each act as charge relay system; for serine protease NS3 activity in the active site. The region spanning 1677–1833 (TGWMSKGQIT…ESNGAIMSEE (157 aa)) is the Helicase ATP-binding domain. 1690–1697 (MHPGSGKT) is a binding site for ATP. The DEAH box motif lies at 1781 to 1784 (DEAH). The Helicase C-terminal domain occupies 1844 to 2002 (GFDWITEYEG…TLRGPVATFY (159 aa)). Lys-1885 is subject to N6-acetyllysine; by host. Residues 2163 to 2183 (FLTIVEVAVLGVATLGILWCF) form a helical membrane-spanning segment. The Lumenal segment spans residues 2184–2191 (VARTSVSR). Residues 2192–2211 (MFLGTVVLFAALLLLWIGGV) constitute an intramembrane region (helical). Asp-2212 is a topological domain (lumenal). The helical transmembrane segment at 2213–2233 (YGYMAGIALIFYIFLTVLQPE) threads the bilayer. Residues 2234 to 2246 (PGKQRSSDDNRLA) are Cytoplasmic-facing. Residues 2247–2267 (YFLLGLLSLAGLVTANEMGML) traverse the membrane as a helical segment. At 2268 to 2301 (DKTKADLAGLMWHGEQRHPAWEEWTNVDIQPARS) the chain is on the lumenal side. The segment at residues 2302–2322 (WGTYVLIVSLFTPYMLHQLQT) is an intramembrane region (helical). The Lumenal segment spans residues 2323–2345 (KIQQLVNSSVASGAQAMRDLGGG). Positions 2346–2366 (TPFFGVAGHVIALGVTSLVGA) form an intramembrane region, helical. Residues 2367–2368 (TP) lie on the Lumenal side of the membrane. A helical membrane pass occupies residues 2369–2389 (LSLGLGVALAAFHLAIVASGL). Topologically, residues 2390 to 2432 (EAELTQRAHRVFFSAMVKNPMVDGDVINPFPDGEPKPVLYERR) are cytoplasmic. The chain crosses the membrane as a helical span at residues 2433 to 2453 (MSLILAIALCMVSVVLNRTAA). The Lumenal portion of the chain corresponds to 2454–2476 (SMTEAGAVGLAALGQLVHPETET). The helical transmembrane segment at 2477 to 2497 (LWTMPMACGMAGLVRGSFWGL) threads the bilayer. At 2498-3416 (LPMGHRLWLK…WDLKLESNII (919 aa)) the chain is on the cytoplasmic side. In terms of domain architecture, mRNA cap 0-1 NS5-type MT spans 2514–2778 (GGADGETLGD…EVDLGTGTRC (265 aa)). Ser-2569 is an S-adenosyl-L-methionine binding site. Ser-2569 carries the phosphoserine modification. Residue Lys-2574 is the For 2'-O-MTase activity of the active site. Residues Gly-2599, Trp-2600, Thr-2617, Ile-2618, Asp-2644, and Val-2645 each contribute to the S-adenosyl-L-methionine site. Residue Asp-2659 is the For 2'-O-MTase activity of the active site. Ile-2660 contacts S-adenosyl-L-methionine. Active-site for 2'-O-MTase activity residues include Lys-2696 and Glu-2732. The segment at 2732-2736 (EMYFS) is interaction with host SCRIB. Position 2734 (Tyr-2734) interacts with S-adenosyl-L-methionine. The Zn(2+) site is built by Glu-2952, His-2956, Cys-2961, and Cys-2964. The RdRp catalytic domain maps to 3042-3191 (GLFYADDTAG…RPIDDRFGKA (150 aa)). Positions 3226, 3242, and 3361 each coordinate Zn(2+).

In the N-terminal section; belongs to the class I-like SAM-binding methyltransferase superfamily. mRNA cap 0-1 NS5-type methyltransferase family. In terms of assembly, homodimer. Interacts (via N-terminus) with host EXOC1 (via C-terminus); this interaction results in EXOC1 degradation through the proteasome degradation pathway. As to quaternary structure, forms heterodimers with envelope protein E in the endoplasmic reticulum and Golgi. Homodimer; in the endoplasmic reticulum and Golgi. Interacts with protein prM. Interacts with non-structural protein 1. In terms of assembly, homodimer; Homohexamer when secreted. Interacts with envelope protein E. As to quaternary structure, interacts (via N-terminus) with serine protease NS3. Forms a heterodimer with serine protease NS3. May form homooligomers. In terms of assembly, forms a heterodimer with NS2B. Interacts with NS4B. Interacts with unphosphorylated RNA-directed RNA polymerase NS5; this interaction stimulates RNA-directed RNA polymerase NS5 guanylyltransferase activity. As to quaternary structure, interacts with serine protease NS3. Homodimer. Interacts with host STAT2; this interaction inhibits the phosphorylation of the latter, and, when all viral proteins are present (polyprotein), targets STAT2 for degradation. Interacts with serine protease NS3. Post-translationally, specific enzymatic cleavages in vivo yield mature proteins. Cleavages in the lumen of endoplasmic reticulum are performed by host signal peptidase, whereas cleavages in the cytoplasmic side are performed by serine protease NS3. Signal cleavage at the 2K-4B site requires a prior NS3 protease-mediated cleavage at the 4A-2K site. Cleaved in post-Golgi vesicles by a host furin, releasing the mature small envelope protein M, and peptide pr. This cleavage is incomplete as up to 30% of viral particles still carry uncleaved prM. In terms of processing, N-glycosylated. Post-translationally, N-glycosylated. The excreted form is glycosylated and this is required for efficient secretion of the protein from infected cells. Acetylated by host KAT5. Acetylation modulates NS3 RNA-binding and unwinding activities and plays an important positive role for viral replication. In terms of processing, phosphorylated on serines residues. This phosphorylation may trigger NS5 nuclear localization.

It localises to the virion. The protein localises to the host nucleus. It is found in the host cytoplasm. The protein resides in the host perinuclear region. Its subcellular location is the secreted. It localises to the virion membrane. The protein localises to the host endoplasmic reticulum membrane. The enzyme catalyses Selective hydrolysis of -Xaa-Xaa-|-Yaa- bonds in which each of the Xaa can be either Arg or Lys and Yaa can be either Ser or Ala.. It catalyses the reaction RNA(n) + a ribonucleoside 5'-triphosphate = RNA(n+1) + diphosphate. The catalysed reaction is a ribonucleoside 5'-triphosphate + H2O = a ribonucleoside 5'-diphosphate + phosphate + H(+). It carries out the reaction ATP + H2O = ADP + phosphate + H(+). The enzyme catalyses a 5'-end (5'-triphosphoguanosine)-ribonucleoside in mRNA + S-adenosyl-L-methionine = a 5'-end (N(7)-methyl 5'-triphosphoguanosine)-ribonucleoside in mRNA + S-adenosyl-L-homocysteine. It catalyses the reaction a 5'-end (N(7)-methyl 5'-triphosphoguanosine)-ribonucleoside in mRNA + S-adenosyl-L-methionine = a 5'-end (N(7)-methyl 5'-triphosphoguanosine)-(2'-O-methyl-ribonucleoside) in mRNA + S-adenosyl-L-homocysteine + H(+). Plays a role in virus budding by binding to the cell membrane and gathering the viral RNA into a nucleocapsid that forms the core of a mature virus particle. During virus entry, may induce genome penetration into the host cytoplasm after hemifusion induced by the surface proteins. Can migrate to the cell nucleus where it modulates host functions. In terms of biological role, inhibits RNA silencing by interfering with host Dicer. Functionally, prevents premature fusion activity of envelope proteins in trans-Golgi by binding to envelope protein E at pH6.0. After virion release in extracellular space, gets dissociated from E dimers. Its function is as follows. Acts as a chaperone for envelope protein E during intracellular virion assembly by masking and inactivating envelope protein E fusion peptide. prM is the only viral peptide matured by host furin in the trans-Golgi network probably to avoid catastrophic activation of the viral fusion activity in acidic Golgi compartment prior to virion release. prM-E cleavage is inefficient, and many virions are only partially matured. These uncleaved prM would play a role in immune evasion. May play a role in virus budding. Exerts cytotoxic effects by activating a mitochondrial apoptotic pathway through M ectodomain. May display a viroporin activity. In terms of biological role, binds to host cell surface receptor and mediates fusion between viral and cellular membranes. Envelope protein is synthesized in the endoplasmic reticulum in the form of heterodimer with protein prM. They play a role in virion budding in the ER, and the newly formed immature particle is covered with 60 spikes composed of heterodimer between precursor prM and envelope protein E. The virion is transported to the Golgi apparatus where the low pH causes dissociation of PrM-E heterodimers and formation of E homodimers. prM-E cleavage is inefficient, and many virions are only partially matured. These uncleaved prM would play a role in immune evasion. Functionally, involved in immune evasion, pathogenesis and viral replication. Once cleaved off the polyprotein, is targeted to three destinations: the viral replication cycle, the plasma membrane and the extracellular compartment. Essential for viral replication. Required for formation of the replication complex and recruitment of other non-structural proteins to the ER-derived membrane structures. Excreted as a hexameric lipoparticle that plays a role against host immune response. Antagonizing the complement function. Binds to the host macrophages and dendritic cells. Inhibits signal transduction originating from Toll-like receptor 3 (TLR3). Its function is as follows. Component of the viral RNA replication complex that functions in virion assembly and antagonizes the host immune response. Required cofactor for the serine protease function of NS3. May have membrane-destabilizing activity and form viroporins. In terms of biological role, displays three enzymatic activities: serine protease, NTPase and RNA helicase. NS3 serine protease, in association with NS2B, performs its autocleavage and cleaves the polyprotein at dibasic sites in the cytoplasm: C-prM, NS2A-NS2B, NS2B-NS3, NS3-NS4A, NS4A-2K and NS4B-NS5. NS3 RNA helicase binds RNA and unwinds dsRNA in the 3' to 5' direction. Functionally, regulates the ATPase activity of the NS3 helicase activity. NS4A allows NS3 helicase to conserve energy during unwinding. Its function is as follows. Functions as a signal peptide for NS4B and is required for the interferon antagonism activity of the latter. Induces the formation of ER-derived membrane vesicles where the viral replication takes place. Inhibits interferon (IFN)-induced host STAT1 phosphorylation and nuclear translocation, thereby preventing the establishment of cellular antiviral state by blocking the IFN-alpha/beta pathway. Inhibits STAT2 translocation in the nucleus after IFN-alpha treatment. In terms of biological role, replicates the viral (+) and (-) RNA genome, and performs the capping of genomes in the cytoplasm. NS5 methylates viral RNA cap at guanine N-7 and ribose 2'-O positions. Besides its role in RNA genome replication, also prevents the establishment of cellular antiviral state by blocking the interferon-alpha/beta (IFN-alpha/beta) signaling pathway. Inhibits host TYK2 and STAT2 phosphorylation, thereby preventing activation of JAK-STAT signaling pathway. This chain is Genome polyprotein, found in Homo sapiens (Human).